We begin with the raw amino-acid sequence, 578 residues long: MPVVDIDTDELRGLTGRTDTSDEEFKEDLFGLGLEFEGETDEDLLQFEFAPDRLDRLSVEGVARSLRYHYGDDRGVYVPETNDPEWTIEVDESVPDERPYVTGAVIRGVDLDEGALDSLIQLQEKLHATMGRGRAKGAIGIHDLAMVKGAPLQEGSEPSITYRGVDPDGVSFVPLDANDELTPNEVLAEHDTGQTYADLVEGLDRYPAIYDELGLFSFPPVINGKRTEVTTGSRELFVELTGTDQWTIDRMCNIVCYALSARGATIEQVEVNYADGATAPSEYGAELVRPNFDTDEKSVSHDRIETLLGVDFEPEEIVDCFERAGLDASYTLDEDVTYEVEIPPYRVDVLHPLDLVDDVGRAYGFDNLEPRYPDVGTVGGRHERSRLEDAVRTSLVGLGFEDLLNFHMTSGTENYDRMNLEAGSDAFGGGNPVEITEPYSEEYTQLRTWAIPSLVMLLERNTHNAYPQDVAEVGFAAERDDSENTNVAERRHVAGAVARRDASYEAAKGRLQAVCDDFRAELETPRTEHPSFIDGRTAAVVIDGEVVGVIGEVHPAVLVEHDLEVPVAAFEFHLDALR.

In terms of domain architecture, B5 spans 292-370 (FDTDEKSVSH…RAYGFDNLEP (79 aa)). The Mg(2+) site is built by Asp348, Asp354, Asp357, and Asp358.

This sequence belongs to the phenylalanyl-tRNA synthetase beta subunit family. Type 2 subfamily. Tetramer of two alpha and two beta subunits. The cofactor is Mg(2+).

It localises to the cytoplasm. The enzyme catalyses tRNA(Phe) + L-phenylalanine + ATP = L-phenylalanyl-tRNA(Phe) + AMP + diphosphate + H(+). The sequence is that of Phenylalanine--tRNA ligase beta subunit from Halorubrum lacusprofundi (strain ATCC 49239 / DSM 5036 / JCM 8891 / ACAM 34).